We begin with the raw amino-acid sequence, 573 residues long: Cytosolic 5'-nucleotidase 1B (573 aa).

Basic residues predominate over residues 1–11; it reads MSQTSLKHKKK. Disordered regions lie at residues 1-200 and 218-238; these read MSQT…PPTE and EPEYISDGPQQRQRQQTEEDE. The span at 12–35 shows a compositional bias: basic and acidic residues; sequence NEPGMRYSKESLDAEKRKDSDKTG. Residues 60 to 73 are compositionally biased toward polar residues; the sequence is NQWSRTSRSPSTGA. The segment covering 93–105 has biased composition (low complexity); the sequence is SSTTSRTSSASPS. Positions 115–136 are enriched in polar residues; the sequence is TSEKSSIQQTPQNRPITQLESQ. Basic and acidic residues-rich tracts occupy residues 161–174 and 182–194; these read WAHRENREPRDLQL and DSREGMPKTREYP. The active-site Nucleophile is the Asp428.

The protein belongs to the 5'-nucleotidase type 3 family. It depends on Mg(2+) as a cofactor. Expressed at highest levels in testis. Also expressed in brain, skeletal muscle, kidney and heart.

The protein resides in the cytoplasm. It catalyses the reaction a ribonucleoside 5'-phosphate + H2O = a ribonucleoside + phosphate. The catalysed reaction is AMP + H2O = adenosine + phosphate. With respect to regulation, activated by ADP. In terms of biological role, catalyzes the hydrolysis of nucleotide monophosphates, releasing inorganic phosphate and the corresponding nucleoside, AMP is the major substrate. This is Cytosolic 5'-nucleotidase 1B (Nt5c1b) from Mus musculus (Mouse).